Here is a 284-residue protein sequence, read N- to C-terminus: Circadian clock oscillator protein KaiA (284 aa).

The segment at 1–135 (MLSQIAICIW…LRLAPVETMA (135 aa)) is psR domain, binds oxidized quinones. A KaiA N-terminal domain is found at 1 to 164 (MLSQIAICIW…DLAQRLQERL (164 aa)). The segment at 165–173 (GYLGVYYKR) is flexible linker. Positions 174 to 282 (DPDRFLRNLP…CEMYRRSIPR (109 aa)) constitute a KaiA C-terminal domain.

Belongs to the KaiA family. Homodimer. The KaiABC complex composition changes during the circadian cycle to control KaiC phosphorylation. Complexes KaiC(6), KaiA(2-4):KaiC(6), KaiB(6):KaiC(6) and KaiC(6):KaiB(6):KaiA(12) are among the most important forms, many form cooperatively. The KaiA:KaiB complex is only found at 20-24 hours in the circadian cycle (subjective night). Binds to the C-terminal A-loop of KaiC via a coiled-coil structure. KaiA and CikA compete for binding to KaiB(fs). CikA copurifies with this protein in the clock complex. Interacts with LdpA.

With respect to regulation, binding of oxidized quinones (produced as darkness falls) prevents KaiA from stimulating KaiC autophosphorylation. Its function is as follows. Key component of the KaiABC oscillator complex, which constitutes the main circadian regulator in cyanobacteria. Complex composition changes during the circadian cycle to control KaiC phosphorylation. KaiA stimulates KaiC autophosphorylation, while KaiB sequesters KaiA, leading to KaiC autodephosphorylation. KaiA binding to the KaiC CII domain during the subjective day yields KaiA(2-4):KaiC(6) complexes which stimulate KaiC autophosphorylation. A KaiA dimer is sufficient to enhance KaiC hexamer phosphorylation. Phospho-Ser-431 KaiC accumulation triggers binding of KaiB during the subjective night to form the KaiB(6):KaiC(6) complex, leading to changes in the output regulators CikA and SasA. KaiB(6):KaiC(6) formation exposes a site for KaiA binding on KaiB that sequesters KaiA from KaiC's CII domain, making the KaiC(6):KaiB(6):KaiA(12) complex resulting in KaiC autodephosphorylation. Complete dephosphorylation of KaiC leads to dissociation of KaiA(2):KaiB(1), completing 1 cycle of the Kai oscillator. Functionally, circadian oscillations can be generated in vitro by incubating KaiA, KaiB and KaiC with 1 mM ATP. The cycle is self-sustainable for at least 3 cycles and resistant to temperature changes. A very robust clock is reconstituted with KaiA, KaiB, KaiC, SasA, CikA and RpaA; output is measured by transcription from an appropriate reporter. In terms of biological role, kaiA binds oxidized quinones via its N-terminal PsR domain and is able to sense redox signals directly; quinone analog DBMIB (2,5-dibromo-3-methyl-6-isopropyl-p-benzoquinone) blocks KaiA stimulation of KaiC phosphorylation. The homodimer binds up to 8 quinones in the crystal structure, 3 in the PsR domain and 1 via the C-terminal helical bundle. Binding of oxidized quinone to the KaiA C-terminal domain reduces the phosphorylation of KaiC slightly; quinones may interact in a complex manner with KaiA to mediate clock input. In Synechococcus elongatus (strain ATCC 33912 / PCC 7942 / FACHB-805) (Anacystis nidulans R2), this protein is Circadian clock oscillator protein KaiA.